The primary structure comprises 303 residues: MLWFKNLMVYRLSREVSLSADEMEKQLSAFSFTPCGSQDMAKTGWVSPMGSHSDALTHTVNGQIVICARKEEKILPSPVIKQELQDKIERLEGEQHRKLKKTEKDSLKDEVLHSLLPRAFSRFNQTFLWIDTVNDLIMVDAASAKRAEDTLALLRKSLGSLPVVPLTLENPIELTLTEWVRSKTLPAGFALMDEAELKAILEDGGVIRCKKQDLFSDEIAVHIEAGKLVTKLALDWQERIQLVLSDDGSLKRLKFADTLRDQNEDIDREDFAQRFDADFILMTSELAALIKNLIEALGGEAQH.

Belongs to the RdgC family.

It is found in the cytoplasm. The protein resides in the nucleoid. May be involved in recombination. The sequence is that of Recombination-associated protein RdgC from Yersinia pseudotuberculosis serotype O:1b (strain IP 31758).